A 255-amino-acid polypeptide reads, in one-letter code: Phosphate import ATP-binding protein PstB (255 aa).

The ABC transporter domain occupies 9-250; the sequence is IAVQNLNFYY…PKIQRTEDYI (242 aa). 41–48 serves as a coordination point for ATP; it reads GPSGCGKS.

It belongs to the ABC transporter superfamily. Phosphate importer (TC 3.A.1.7) family. In terms of assembly, the complex is composed of two ATP-binding proteins (PstB), two transmembrane proteins (PstC and PstA) and a solute-binding protein (PstS).

It localises to the cell inner membrane. It catalyses the reaction phosphate(out) + ATP + H2O = ADP + 2 phosphate(in) + H(+). Its function is as follows. Part of the ABC transporter complex PstSACB involved in phosphate import. Responsible for energy coupling to the transport system. This Haemophilus influenzae (strain 86-028NP) protein is Phosphate import ATP-binding protein PstB.